We begin with the raw amino-acid sequence, 69 residues long: Large ribosomal subunit protein uL29 (69 aa).

Belongs to the universal ribosomal protein uL29 family.

The chain is Large ribosomal subunit protein uL29 from Polaromonas sp. (strain JS666 / ATCC BAA-500).